The primary structure comprises 102 residues: uncharacterized protein (102 aa).

Residues 1–43 (MNNAHEENISSVTGFKSTSGSPAIGSSLPGRSGEGRSSSSSSG) are disordered. Positions 9–21 (ISSVTGFKSTSGS) are enriched in polar residues. The segment covering 25–43 (GSSLPGRSGEGRSSSSSSG) has biased composition (low complexity).

This is an uncharacterized protein from Saccharomyces cerevisiae (strain ATCC 204508 / S288c) (Baker's yeast).